A 48-amino-acid polypeptide reads, in one-letter code: ATP synthase protein 8 (48 aa).

A helical transmembrane segment spans residues 13-35 (LTYGFTFILTILFLTSYVFLPMI).

The protein belongs to the ATPase protein 8 family. In terms of assembly, F-type ATPases have 2 components, CF(1) - the catalytic core - and CF(0) - the membrane proton channel. In yeast, the dimeric form of ATP synthase consists of 18 polypeptides: alpha, beta, gamma, delta, epsilon, 4 (B), 5 (OSCP), 6 (A), 8, 9 (C), d, E (Tim11), f, g, h, i, j and k.

The protein resides in the mitochondrion membrane. Functionally, mitochondrial membrane ATP synthase (F(1)F(0) ATP synthase or Complex V) produces ATP from ADP in the presence of a proton gradient across the membrane which is generated by electron transport complexes of the respiratory chain. F-type ATPases consist of two structural domains, F(1) - containing the extramembraneous catalytic core and F(0) - containing the membrane proton channel, linked together by a central stalk and a peripheral stalk. During catalysis, ATP synthesis in the catalytic domain of F(1) is coupled via a rotary mechanism of the central stalk subunits to proton translocation. Part of the complex F(0) domain. Minor subunit located with subunit a in the membrane. This Eremothecium gossypii (strain ATCC 10895 / CBS 109.51 / FGSC 9923 / NRRL Y-1056) (Yeast) protein is ATP synthase protein 8 (ATP8).